The primary structure comprises 430 residues: MTTLTLNTSLLSSRRILAAFSGGLDSTVLLHQLVLWRERHPDVTLRAIHIHHGLSPHADSWVRHCETVCERWQVPLVVERVTLADNGLGIEAHAREARYRAFAQTLLPGEVLATAQHLDDQCETFLLALKRGSGPAGLSAMGERSPFAGTLLLRPLLRETRKTLEQWAVRHGLCWIEDESNQDDAYDRNFLRLRALPLLQQRWPHFPAAVARSATLCAEQERLLDELLASDLTDCITTEGTLRLSPLMSMSDVRRAAILRRWLAMRNAPMPSRDALERIWQEVALARDDASPCLRFGDREIRRYQSQLWWIKSVAGQHETTVAWPVWQTPLALPAGLGTVQLVPGGELRRPREEESVSIRFKAPGLLHIVGRHGGRKLKKIWQEQGIPPWRRDTTPLLFYGETLIAAAGVFVTREGAAEDKEGVSLVWHA.

21 to 26 (SGGLDS) contacts ATP.

Belongs to the tRNA(Ile)-lysidine synthase family.

It is found in the cytoplasm. The enzyme catalyses cytidine(34) in tRNA(Ile2) + L-lysine + ATP = lysidine(34) in tRNA(Ile2) + AMP + diphosphate + H(+). Ligates lysine onto the cytidine present at position 34 of the AUA codon-specific tRNA(Ile) that contains the anticodon CAU, in an ATP-dependent manner. Cytidine is converted to lysidine, thus changing the amino acid specificity of the tRNA from methionine to isoleucine. This is tRNA(Ile)-lysidine synthase from Salmonella agona (strain SL483).